The sequence spans 158 residues: Na(+)/H(+) antiporter subunit E (158 aa).

A run of 2 helical transmembrane segments spans residues 22–41 (YTAV…LFVL) and 54–76 (IWAI…IDVI).

This sequence belongs to the CPA3 antiporters (TC 2.A.63) subunit E family. Forms a heterooligomeric complex that consists of seven subunits: MrpA, MrpB, MrpC, MrpD, MrpE, MrpF and MrpG.

It localises to the cell membrane. Its function is as follows. Mnh complex is a Na(+)Li(+)/H(+) antiporter involved in Na(+) and/or Li(+) excretion and Na(+) resistance. Na(+)/H(+) antiport consumes a transmembrane electrical potential, and is thus inferred to be electrogenic. Does not transport K(+), Ca(2+) or Mg(2+). Functionally, mrp complex is a Na(+)/H(+) antiporter involved in Na(+) excretion and Na(+) resistance. This chain is Na(+)/H(+) antiporter subunit E (mrpE), found in Alkalihalophilus pseudofirmus (strain ATCC BAA-2126 / JCM 17055 / OF4) (Bacillus pseudofirmus).